Consider the following 504-residue polypeptide: ATP synthase subunit alpha (504 aa).

169–176 (GDRKTGKT) serves as a coordination point for ATP.

Belongs to the ATPase alpha/beta chains family. In terms of assembly, F-type ATPases have 2 components, CF(1) - the catalytic core - and CF(0) - the membrane proton channel. CF(1) has five subunits: alpha(3), beta(3), gamma(1), delta(1), epsilon(1). CF(0) has three main subunits: a(1), b(2) and c(9-12). The alpha and beta chains form an alternating ring which encloses part of the gamma chain. CF(1) is attached to CF(0) by a central stalk formed by the gamma and epsilon chains, while a peripheral stalk is formed by the delta and b chains.

It is found in the cell membrane. It carries out the reaction ATP + H2O + 4 H(+)(in) = ADP + phosphate + 5 H(+)(out). Its function is as follows. Produces ATP from ADP in the presence of a proton gradient across the membrane. The alpha chain is a regulatory subunit. In Leuconostoc citreum (strain KM20), this protein is ATP synthase subunit alpha.